The sequence spans 216 residues: MEFCGGTLRTRFQRTSVPNSPVTVVHTVAGSGKTTFIRNLLIDHPQLVARTYGTPDVPNLLGYGIRDRHGDAHIVDEYPAADLRSHPSVSIVFADPLQHHGEVRPAHFTCSHTHRFGKSTCSLLGTLGVYCTSDKEDSVTFAGAYLAEPVGTLIALGEDAELVLDNHRVEYFTPCQALGLTFPSVTLLTDAPIEDQPPVSRYIALTRHTDSLLILN.

The region spanning 1-110 (MEFCGGTLRT…GEVRPAHFTC (110 aa)) is the (+)RNA virus helicase ATP-binding domain. Residues 111–216 (SHTHRFGKST…RHTDSLLILN (106 aa)) enclose the (+)RNA virus helicase C-terminal domain.

This sequence belongs to the Tymovirales TGBp1 protein family. In terms of assembly, homodimer and homooligomer. Interacts with capsid protein. Interacts with host AGO1; this interaction targets the host protein for degradation, thereby suppressing the antiviral RNA silencing.

The protein localises to the host cytoplasm. Functionally, transports viral genome to neighboring plant cells directly through plasmosdesmata, without any budding. The movement protein allows efficient cell to cell propagation, by bypassing the host cell wall barrier. Increases plasmodesma size exclusion limit. Acts as a suppressor of RNA-mediated gene silencing, also known as post-transcriptional gene silencing (PTGS), a mechanism of plant viral defense that limits the accumulation of viral RNAs. In Lilium formosanum, this protein is Movement and silencing protein TGBp1.